We begin with the raw amino-acid sequence, 551 residues long: Eukaryotic translation initiation factor 3 subunit D-2 (551 aa).

The tract at residues 108 to 152 is disordered; the sequence is RARGRTGRGNATLGGLGGPVAGGSTANSTKYGKGRNTRNAQNMGR. A compositionally biased stretch (gly residues) spans 119 to 128; it reads TLGGLGGPVA. The RNA gate stretch occupies residues 290-304; it reads QFDLLTVNETSLEPP. A disordered region spans residues 530-551; sequence AFDSDGDDESESSEPFGNSIDN. Residues 531-541 are compositionally biased toward acidic residues; it reads FDSDGDDESES.

It belongs to the eIF-3 subunit D family. In terms of assembly, component of the eukaryotic translation initiation factor 3 (eIF-3) complex. The eIF-3 complex interacts with pix.

It is found in the cytoplasm. In terms of biological role, mRNA cap-binding component of the eukaryotic translation initiation factor 3 (eIF-3) complex, which is involved in protein synthesis of a specialized repertoire of mRNAs and, together with other initiation factors, stimulates binding of mRNA and methionyl-tRNAi to the 40S ribosome. The eIF-3 complex specifically targets and initiates translation of a subset of mRNAs involved in cell proliferation. In the eIF-3 complex, eif3d specifically recognizes and binds the 7-methylguanosine cap of a subset of mRNAs. This is Eukaryotic translation initiation factor 3 subunit D-2 from Drosophila yakuba (Fruit fly).